The chain runs to 638 residues: 1-deoxy-D-xylulose-5-phosphate synthase (638 aa).

Thiamine diphosphate is bound by residues His-79 and 120–122; that span reads GHS. Asp-151 is a binding site for Mg(2+). Residues 152 to 153, Asn-182, Tyr-291, and Glu-373 contribute to the thiamine diphosphate site; that span reads GA. Mg(2+) is bound at residue Asn-182.

It belongs to the transketolase family. DXPS subfamily. In terms of assembly, homodimer. Mg(2+) is required as a cofactor. It depends on thiamine diphosphate as a cofactor.

It catalyses the reaction D-glyceraldehyde 3-phosphate + pyruvate + H(+) = 1-deoxy-D-xylulose 5-phosphate + CO2. It functions in the pathway metabolic intermediate biosynthesis; 1-deoxy-D-xylulose 5-phosphate biosynthesis; 1-deoxy-D-xylulose 5-phosphate from D-glyceraldehyde 3-phosphate and pyruvate: step 1/1. Catalyzes the acyloin condensation reaction between C atoms 2 and 3 of pyruvate and glyceraldehyde 3-phosphate to yield 1-deoxy-D-xylulose-5-phosphate (DXP). This is 1-deoxy-D-xylulose-5-phosphate synthase from Xanthomonas campestris pv. campestris (strain 8004).